The primary structure comprises 101 residues: Citrate lyase acyl carrier protein (101 aa).

An O-(phosphoribosyl dephospho-coenzyme A)serine modification is found at Ser14.

This sequence belongs to the CitD family. As to quaternary structure, oligomer with a subunit composition of (alpha,beta,gamma)6.

It is found in the cytoplasm. In terms of biological role, covalent carrier of the coenzyme of citrate lyase. The polypeptide is Citrate lyase acyl carrier protein (Lacticaseibacillus casei (strain BL23) (Lactobacillus casei)).